Consider the following 255-residue polypeptide: Tumor necrosis factor receptor superfamily member 9 (255 aa).

Positions 1–23 are cleaved as a signal peptide; it reads MGNSCYNIVATLLLVLNFERTRS. 4 TNFR-Cys repeats span residues 24 to 45, 47 to 86, 87 to 118, and 119 to 159; these read LQDPCSNCPAGTFCDNNRNQIC, PCPPNSFSSAGGQRTCDICRQCKGVFRTRKECSSTSNAEC, DCTPGFHCLGAGCSMCEQDCKQGQELTKKGCK, and DCCF…VVCG. The Extracellular segment spans residues 24 to 186; it reads LQDPCSNCPA…PAREPGHSPQ (163 aa). 9 cysteine pairs are disulfide-bonded: Cys-28/Cys-37, Cys-31/Cys-45, Cys-48/Cys-62, Cys-65/Cys-78, Cys-68/Cys-86, Cys-88/Cys-94, Cys-99/Cys-106, Cys-102/Cys-117, and Cys-121/Cys-133. Asn-138 and Asn-149 each carry an N-linked (GlcNAc...) asparagine glycan. An intrachain disulfide couples Cys-139 to Cys-158. The disordered stretch occupies residues 161–180; sequence SPADLSPGASSVTPPAPARE. Residues 187–213 form a helical membrane-spanning segment; sequence IISFFLALTSTALLFLLFFLTLRFSVV. The Cytoplasmic segment spans residues 214–255; that stretch reads KRGRKKLLYIFKQPFMRPVQTTQEEDGCSCRFPEEEEGGCEL. An interaction with LRR-1 region spans residues 214–255; that stretch reads KRGRKKLLYIFKQPFMRPVQTTQEEDGCSCRFPEEEEGGCEL.

In terms of assembly, predominantly homodimeric, but may also exist as a monomer. Interacts with TRAF1, TRAF2 and TRAF3. Interacts with LRR-repeat protein 1/LRR-1. As to expression, expressed on the surface of activated T-cells.

The protein resides in the cell membrane. Its function is as follows. Receptor for TNFSF9/4-1BBL. Conveys a signal that enhances CD8(+) T-cell survival, cytotoxicity, and mitochondrial activity, thereby promoting immunity against viruses and tumors. In Homo sapiens (Human), this protein is Tumor necrosis factor receptor superfamily member 9 (TNFRSF9).